The sequence spans 196 residues: Large ribosomal subunit protein bL25 (196 aa).

This sequence belongs to the bacterial ribosomal protein bL25 family. CTC subfamily. As to quaternary structure, part of the 50S ribosomal subunit; part of the 5S rRNA/L5/L18/L25 subcomplex. Contacts the 5S rRNA. Binds to the 5S rRNA independently of L5 and L18.

In terms of biological role, this is one of the proteins that binds to the 5S RNA in the ribosome where it forms part of the central protuberance. The sequence is that of Large ribosomal subunit protein bL25 from Geotalea daltonii (strain DSM 22248 / JCM 15807 / FRC-32) (Geobacter daltonii).